We begin with the raw amino-acid sequence, 363 residues long: 3-isopropylmalate dehydrogenase (363 aa).

79–92 (GPKWEHLPPNEQPE) contacts NAD(+). Substrate contacts are provided by Arg100, Arg110, Arg139, and Asp228. Residues Asp228, Asp252, and Asp256 each contribute to the Mg(2+) site. An NAD(+)-binding site is contributed by 286-298 (GSAPDIAGKNIAN).

Belongs to the isocitrate and isopropylmalate dehydrogenases family. LeuB type 1 subfamily. As to quaternary structure, homodimer. The cofactor is Mg(2+). It depends on Mn(2+) as a cofactor.

Its subcellular location is the cytoplasm. The catalysed reaction is (2R,3S)-3-isopropylmalate + NAD(+) = 4-methyl-2-oxopentanoate + CO2 + NADH. It functions in the pathway amino-acid biosynthesis; L-leucine biosynthesis; L-leucine from 3-methyl-2-oxobutanoate: step 3/4. Catalyzes the oxidation of 3-carboxy-2-hydroxy-4-methylpentanoate (3-isopropylmalate) to 3-carboxy-4-methyl-2-oxopentanoate. The product decarboxylates to 4-methyl-2 oxopentanoate. The chain is 3-isopropylmalate dehydrogenase from Vibrio cholerae serotype O1 (strain ATCC 39315 / El Tor Inaba N16961).